The primary structure comprises 128 residues: B2 protein (128 aa).

Residues 1–10 (SLILLVAVQA) form the signal peptide. 2 cysteine pairs are disulfide-bonded: C26–C57 and C97–C114.

This sequence belongs to the PBP/GOBP family. In terms of processing, N-glycosylated. Tubular accessory sex gland.

It is found in the secreted. In terms of biological role, may be a carrier protein for lipids. The chain is B2 protein from Tenebrio molitor (Yellow mealworm beetle).